The following is a 250-amino-acid chain: MSKENKTTDFGFTQVPWEEKQKKVAGVFHSVAAKYDLMNDLMSFGIHRIWKKQTIAKSGVHKGDNVLDLAGGTGDLAYKFCQMVGQQGKVILSDINSSMLEVGKEKLTNKGCVGNIEYVQANAECLPFPDNYFDCITISFGLRNVTDKDKALASMCRVLKPGGRLLVLEFSKPIIPLLSKVYDEYSFKALPFLGKIITQDAESYKYLAESIRKHPDQQTLKQMMYDAGFDNVEYQNMTGGIVALHIGYKY.

S-adenosyl-L-methionine-binding positions include T73, D94, 122–123 (NA), and S139.

It belongs to the class I-like SAM-binding methyltransferase superfamily. MenG/UbiE family.

It carries out the reaction a 2-demethylmenaquinol + S-adenosyl-L-methionine = a menaquinol + S-adenosyl-L-homocysteine + H(+). The catalysed reaction is a 2-methoxy-6-(all-trans-polyprenyl)benzene-1,4-diol + S-adenosyl-L-methionine = a 5-methoxy-2-methyl-3-(all-trans-polyprenyl)benzene-1,4-diol + S-adenosyl-L-homocysteine + H(+). The protein operates within quinol/quinone metabolism; menaquinone biosynthesis; menaquinol from 1,4-dihydroxy-2-naphthoate: step 2/2. Its pathway is cofactor biosynthesis; ubiquinone biosynthesis. In terms of biological role, methyltransferase required for the conversion of demethylmenaquinol (DMKH2) to menaquinol (MKH2) and the conversion of 2-polyprenyl-6-methoxy-1,4-benzoquinol (DDMQH2) to 2-polyprenyl-3-methyl-6-methoxy-1,4-benzoquinol (DMQH2). This Francisella tularensis subsp. tularensis (strain WY96-3418) protein is Ubiquinone/menaquinone biosynthesis C-methyltransferase UbiE.